The sequence spans 116 residues: Phycoerythrin alpha-3 subunit (116 aa).

(2R,3E)-phycoerythrobilin is bound by residues Ser53, Glu63, Arg64, Cys67, and Lys85.

The protein belongs to the phycoerythrin family. Heterotetramer of 2 different alpha chains and 2 identical beta chains which form 2 alpha-beta heterodimers within the heterotetramer. The two alpha-beta heterodimers are rotated to an open configuration in contrast to the closed configuration found in other cryptophyte species due to the insertion of a single amino acid, Asp-65, in a conserved region of the alpha chain. In the open form, the central chromophores are not in physical contact but are separated by a water-filled channel. Post-translationally, contains three phycoerythrobilin chromophores with binding mediated by both the alpha and beta subunits.

It localises to the plastid. The protein localises to the chloroplast thylakoid membrane. In terms of biological role, light-harvesting photosynthetic tetrapyrrole chromophore-protein from the phycobiliprotein complex. This is Phycoerythrin alpha-3 subunit from Hemiselmis andersenii (Cryptophyte alga).